The following is a 138-amino-acid chain: Putative pre-16S rRNA nuclease (138 aa).

The protein belongs to the YqgF nuclease family.

The protein localises to the cytoplasm. Its function is as follows. Could be a nuclease involved in processing of the 5'-end of pre-16S rRNA. The protein is Putative pre-16S rRNA nuclease of Geobacillus thermodenitrificans (strain NG80-2).